Reading from the N-terminus, the 222-residue chain is Pyridoxine/pyridoxamine 5'-phosphate oxidase (222 aa).

FMN contacts are provided by residues arginine 71–lysine 76, tyrosine 86–threonine 87, lysine 93, and glutamine 115. Lysine 76 is a substrate binding site. 3 residues coordinate substrate: tyrosine 133, arginine 137, and serine 141. Residues glutamine 150–serine 151 and tryptophan 195 contribute to the FMN site. Arginine 201–histidine 203 provides a ligand contact to substrate. Residue arginine 205 coordinates FMN.

It belongs to the pyridoxamine 5'-phosphate oxidase family. Homodimer. Requires FMN as cofactor.

The catalysed reaction is pyridoxamine 5'-phosphate + O2 + H2O = pyridoxal 5'-phosphate + H2O2 + NH4(+). It catalyses the reaction pyridoxine 5'-phosphate + O2 = pyridoxal 5'-phosphate + H2O2. Its pathway is cofactor metabolism; pyridoxal 5'-phosphate salvage; pyridoxal 5'-phosphate from pyridoxamine 5'-phosphate: step 1/1. The protein operates within cofactor metabolism; pyridoxal 5'-phosphate salvage; pyridoxal 5'-phosphate from pyridoxine 5'-phosphate: step 1/1. In terms of biological role, catalyzes the oxidation of either pyridoxine 5'-phosphate (PNP) or pyridoxamine 5'-phosphate (PMP) into pyridoxal 5'-phosphate (PLP). This is Pyridoxine/pyridoxamine 5'-phosphate oxidase from Caulobacter vibrioides (strain ATCC 19089 / CIP 103742 / CB 15) (Caulobacter crescentus).